Consider the following 420-residue polypeptide: Glycerol-3-phosphate dehydrogenase [NAD(+)] 2, chloroplastic (420 aa).

The N-terminal 45 residues, 1–45, are a transit peptide targeting the chloroplast; that stretch reads MAASVQPACLDLHFSGKHPPLLKHNAIIVRCVSSPNVIPEADSIS. Residues 94–99, phenylalanine 171, lysine 194, and alanine 228 each bind NAD(+); that span reads GGGSFG. Lysine 194 contacts substrate. Lysine 279 functions as the Proton acceptor in the catalytic mechanism. NAD(+)-binding residues include arginine 343 and glutamate 369. 343-344 lines the substrate pocket; it reads RN.

The protein belongs to the NAD-dependent glycerol-3-phosphate dehydrogenase family.

Its subcellular location is the plastid. The protein resides in the chloroplast. The enzyme catalyses sn-glycerol 3-phosphate + NAD(+) = dihydroxyacetone phosphate + NADH + H(+). It functions in the pathway membrane lipid metabolism; glycerophospholipid metabolism. In terms of biological role, required to supply glycerol-3-phosphate in the chloroplast for the synthesis of glycerolipids. Required for activation of systemic acquired resistance (SAR). Provision of glycerol-3-phosphate may be involved in generating lipid signals necessary for mediating defense responses and SAR. This chain is Glycerol-3-phosphate dehydrogenase [NAD(+)] 2, chloroplastic (GLY1), found in Arabidopsis thaliana (Mouse-ear cress).